A 542-amino-acid polypeptide reads, in one-letter code: MTARRTRWTRRTDRSLPIRSAAAAVAFAAGATACSAPTGGGGDGGTEAAESVVIGVASEPDTLSPLLGYGKDGNSKIFDGLLARDTDLELKPALAAALPKVTDDGRTITFTLREGVNFSDGEPLTAGDVYTYRTVLDEKTNNTARSELDAVRERSARADGTVVFTLKYPYAPFAARTVLPIVPEHVAGKQDPNTGDFNTEPVGTGPYVLTGWSKGEKLGFRANPHYWGDKPAVKSFTMAVTADDNVRATRLRSGDLDGAVLPPNLAATFEKDDGRRTYRARSYDFRAVTLPSAGQVTGDRAIRRALDAAVDRQAMVDKILDGAGRPAYGPLPVDDPWYERGIERPRDLAAAGRILDEAGWKPGSGGIRARDGQRASFTLYYPSGDKVRQDHALAYASDAKKAGIEVKVEGATWEVIEPRMKTDAVLADLGSVGDPDFGLYTLLHSTLAGDGFNNMAHYANPAVDEALDAGRRSQDPKVRAAAYREIQKALVADPGYTFLTHIDHLYVLADRWDGLTTQLEGRTNTASPAGPGGTSRTGGRKK.

Residues Met1–Ala33 form the signal peptide. A lipid anchor (N-palmitoyl cysteine) is attached at Cys34. Cys34 is lipidated: S-diacylglycerol cysteine. Positions Leu519–Lys542 are disordered.

Belongs to the bacterial solute-binding protein 5 family.

It is found in the cell membrane. Functionally, required for transport of an unidentified substrate. This is Protein XP55 (xp55) from Streptomyces lividans.